A 68-amino-acid polypeptide reads, in one-letter code: Molybdenum-pterin-binding protein 1 (68 aa).

The Mop domain maps to 2–68 (SISARNQLKG…IKSTDVMILA (67 aa)).

Functionally, binds one mole of molybdenum per mole of protein and contains a pterin. This is Molybdenum-pterin-binding protein 1 (mopI) from Clostridium pasteurianum.